The chain runs to 936 residues: Calcium homeostasis endoplasmic reticulum protein (936 aa).

N-acetylmethionine is present on Met-1. Residues 15-57 (VIDKLAQFVARNGPEFEKMTMEKQKDNPKFSFLFGGEFYSYYK) form an SURP motif repeat. Residue Lys-18 is modified to N6-acetyllysine. Residues 77 to 102 (EPTSAMPPLPQPPLAPTASLTPAQGT) are disordered. Over residues 81 to 91 (AMPPLPQPPLA) the composition is skewed to pro residues. The CID domain maps to 149–289 (ETQLDMSEFD…QLQSPALGLG (141 aa)). The segment at 328 to 646 (LAQQQQQQQQ…RQGPPHINHD (319 aa)) is disordered. A compositionally biased stretch (low complexity) spans 330-355 (QQQQQQQQQQQQQPQPQPQPQIQLPQ). A compositionally biased stretch (pro residues) spans 363–383 (TPPPPAPPPASAPAPTIPPTT). The segment covering 395-405 (PGSSEYDTSAG) has biased composition (polar residues). Over residues 488-500 (PWNNQPDPNWNNQ) the composition is skewed to low complexity. Residues 534 to 550 (PFPPHQQHPQFNQPPHP) are compositionally biased toward pro residues. Over residues 551-560 (HNFNRFPPRF) the composition is skewed to low complexity. The segment covering 561 to 572 (MQDDFPPRHPFE) has biased composition (basic and acidic residues). A compositionally biased stretch (basic residues) spans 594 to 603 (PHHHPGHRMP). Tyr-723 is modified (phosphotyrosine). The tract at residues 731–887 (RARRRKGQEK…DPIKGGDVRD (157 aa)) is disordered. Residues 748–758 (SRSRSKSRGRS) are compositionally biased toward basic residues. Positions 759–773 (SSRSSSRSSKSSRSS) are enriched in low complexity. Over residues 774–824 (SRSHSRSRSRSSSRSRSRSRSRSRSSRSRSRSRSRSRSKSYSPGRRRRSRS) the composition is skewed to basic residues. A phosphoserine mark is found at Ser-822, Ser-824, and Ser-826. Thr-828 carries the phosphothreonine modification. Ser-837 carries the post-translational modification Phosphoserine. Positions 850 to 900 (EENKGHQMLVKMGWSGSGGLGAKEQGIQDPIKGGDVRDKWDQYKGVGVALD) constitute a G-patch domain. Residue Lys-853 forms a Glycyl lysine isopeptide (Lys-Gly) (interchain with G-Cter in SUMO2) linkage. Residues Ser-864 and Ser-866 each carry the phosphoserine modification. Lys-881 is covalently cross-linked (Glycyl lysine isopeptide (Lys-Gly) (interchain with G-Cter in SUMO2)). An N6-acetyllysine modification is found at Lys-888. Ser-913 is subject to Phosphoserine.

Its subcellular location is the cytoplasm. It is found in the perinuclear region. It localises to the endoplasmic reticulum. Functionally, involved in calcium homeostasis, growth and proliferation. The sequence is that of Calcium homeostasis endoplasmic reticulum protein from Mus musculus (Mouse).